Here is a 678-residue protein sequence, read N- to C-terminus: Electrogenic aspartate/glutamate antiporter SLC25A12, mitochondrial (678 aa).

Position 2 is an N-acetylalanine (alanine 2). The tract at residues 2–294 (AVKVQTTKRG…TLADIERIAP (293 aa)) is regulatory N-terminal domain. Residues 2–329 (AVKVQTTKRG…WLQIAESAYR (328 aa)) lie on the Mitochondrial intermembrane side of the membrane. Ca(2+) contacts are provided by aspartate 65, threonine 67, aspartate 69, leucine 71, and glutamate 76. EF-hand domains lie at 65-76 (DQTKDGLISYQE), 86-121 (APDSMFIVAFQLFDKSGNGEVTFENVKEIFGQTIIH), 125-155 (PFNWDCEFIRLHFGHNRKKHLNYTEFTQFLQ), and 157-192 (LQLEHARQAFALKDKSKSGMISGLDFSDIMVTIRSH). Positions 295–310 (LAEGALPYNLAELQRQ) are linker loop domain. Positions 320-612 (WLQIAESAYR…RWFYIDFGGL (293 aa)) are carrier domain. 3 Solcar repeats span residues 324 to 416 (AESA…VRDK), 424 to 508 (VPLP…CKLL), and 516 to 604 (VGGL…LQRW). Residues 330–347 (FTLGSVAGAVGATAVYPI) traverse the membrane as a helical segment. Topologically, residues 348–390 (DLVKTRMQNQRGSGSVVGELMYKNSFDCFKKVLRYEGFFGLYR) are mitochondrial matrix. Residues 391-410 (GLIPQLIGVAPEKAIKLTVN) form a helical membrane-spanning segment. Over 411 to 433 (DFVRDKFTRRDGSVPLPAEVLAG) the chain is Mitochondrial intermembrane. The helical transmembrane segment at 434–447 (GCAGGSQVIFTNPL) threads the bilayer. The Mitochondrial matrix segment spans residues 448-482 (EIVKIRLQVAGEITTGPRVSALNVLRDLGIFGLYK). A helical membrane pass occupies residues 483–502 (GAKACFLRDIPFSAIYFPVY). The Mitochondrial intermembrane segment spans residues 503–521 (AHCKLLLADENGHVGGLNL). Residues 522 to 539 (LAAGAMAGVPAASLVTPA) traverse the membrane as a helical segment. Residues 540–578 (DVIKTRLQVAARAGQTTYSGVIDCFRKILREEGPSAFWK) lie on the Mitochondrial matrix side of the membrane. The chain crosses the membrane as a helical span at residues 579–598 (GTAARVFRSSPQFGVTLVTY). Residues 599 to 678 (ELLQRWFYID…QPKAAVAATQ (80 aa)) lie on the Mitochondrial intermembrane side of the membrane. Residues 613-675 (KPAGSEPTPK…AVVQPKAAVA (63 aa)) form a C-terminal domain region.

This sequence belongs to the mitochondrial carrier (TC 2.A.29) family. As to quaternary structure, homodimer (via N-terminus). In terms of tissue distribution, expressed predominantly in the heart and skeletal muscle, weakly in brain and kidney.

Its subcellular location is the mitochondrion inner membrane. The catalysed reaction is L-aspartate(in) + L-glutamate(out) + H(+)(out) = L-aspartate(out) + L-glutamate(in) + H(+)(in). The enzyme catalyses 3-sulfino-L-alanine(out) + L-glutamate(in) + H(+)(in) = 3-sulfino-L-alanine(in) + L-glutamate(out) + H(+)(out). It catalyses the reaction 3-sulfino-L-alanine(out) + L-aspartate(in) = 3-sulfino-L-alanine(in) + L-aspartate(out). With respect to regulation, activated by calcium-binding in the mitochondrial intermembrane space. Inhibited by pyridoxal 5'-phosphate, bathophenathroline, mercurials, diethyl pyrocarbonate and N-ethylmaleimide. Mitochondrial electrogenic aspartate/glutamate antiporter that favors efflux of aspartate and entry of glutamate and proton within the mitochondria as part of the malate-aspartate shuttle. Also mediates the uptake of L-cysteinesulfinate (3-sulfino-L-alanine) by mitochondria in exchange of L-glutamate and proton. Can also exchange L-cysteinesulfinate with aspartate in their anionic form without any proton translocation. Lacks transport activity towards L-glutamine or gamma-aminobutyric acid (GABA). This Homo sapiens (Human) protein is Electrogenic aspartate/glutamate antiporter SLC25A12, mitochondrial.